The sequence spans 341 residues: L-threonine 3-dehydrogenase (341 aa).

Cys-38 is a Zn(2+) binding site. Active-site charge relay system residues include Thr-40 and His-43. The Zn(2+) site is built by His-63, Glu-64, Cys-93, Cys-96, Cys-99, and Cys-107. NAD(+) is bound by residues Ile-175, Asp-195, Arg-200, Leu-262–Ile-264, and Ile-286–Tyr-287.

It belongs to the zinc-containing alcohol dehydrogenase family. Homotetramer. The cofactor is Zn(2+).

The protein resides in the cytoplasm. The enzyme catalyses L-threonine + NAD(+) = (2S)-2-amino-3-oxobutanoate + NADH + H(+). The protein operates within amino-acid degradation; L-threonine degradation via oxydo-reductase pathway; glycine from L-threonine: step 1/2. Catalyzes the NAD(+)-dependent oxidation of L-threonine to 2-amino-3-ketobutyrate. The polypeptide is L-threonine 3-dehydrogenase (Shewanella sp. (strain ANA-3)).